The sequence spans 88 residues: Class I hydrophobin F (88 aa).

The N-terminal stretch at 1 to 21 is a signal peptide; that stretch reads MLSRLFTVPAILLATLGSAAT. 4 cysteine pairs are disulfide-bonded: Cys30–Cys67, Cys34–Cys58, Cys35–Cys51, and Cys68–Cys84.

It belongs to the fungal hydrophobin family.

The protein resides in the secreted. It localises to the cell wall. It is found in the vacuole. The protein localises to the cytoplasmic vesicle. Its function is as follows. Aerial growth, conidiation, and dispersal of filamentous fungi in the environment rely upon a capability of their secreting small amphipathic proteins called hydrophobins (HPBs) with low sequence identity. Class I can self-assemble into an outermost layer of rodlet bundles on aerial cell surfaces, conferring cellular hydrophobicity that supports fungal growth, development and dispersal; whereas Class II form highly ordered films at water-air interfaces through intermolecular interactions but contribute nothing to the rodlet structure. Hyd1F contributes to certain cell wall-related features, such as hydrophobicity but is not involved in cell wall-related events during fungal proliferation in host hemocoel. Does not contribute to conidial hydrophobicity. This chain is Class I hydrophobin F, found in Beauveria bassiana (strain ARSEF 2860) (White muscardine disease fungus).